A 472-amino-acid polypeptide reads, in one-letter code: Regulator of G-protein signaling 6 (472 aa).

The region spanning 40 to 115 (KTGGVPIRTV…DDGTFYRFQA (76 aa)) is the DEP domain. One can recognise a G protein gamma domain in the interval 261-330 (IRKQITFLNA…MSKEPSQQRV (70 aa)). In terms of domain architecture, RGS spans 336–441 (SFDEILKDQV…LMKSDSYARF (106 aa)).

In terms of assembly, interacts with GNB5. Interacts with RGS7BP, leading to regulate the subcellular location of the heterodimer formed with GNB5. Interacts with GNAI1.

The protein localises to the cytoplasm. Its subcellular location is the cytosol. It is found in the membrane. The protein resides in the nucleus. It localises to the cell membrane. Functionally, regulates G protein-coupled receptor signaling cascades. Inhibits signal transduction by increasing the GTPase activity of G protein alpha subunits, thereby driving them into their inactive GDP-bound form. The RGS6/GNB5 dimer enhances GNAO1 GTPase activity. This chain is Regulator of G-protein signaling 6 (RGS6), found in Homo sapiens (Human).